The following is a 417-amino-acid chain: UDP-N-acetylglucosamine 1-carboxyvinyltransferase (417 aa).

22–23 (KN) lines the phosphoenolpyruvate pocket. Residue arginine 93 participates in UDP-N-acetyl-alpha-D-glucosamine binding. The Proton donor role is filled by cysteine 117. Cysteine 117 bears the 2-(S-cysteinyl)pyruvic acid O-phosphothioketal mark. Residues 122-126 (RPVDQ), aspartate 305, and isoleucine 327 contribute to the UDP-N-acetyl-alpha-D-glucosamine site.

The protein belongs to the EPSP synthase family. MurA subfamily.

The protein localises to the cytoplasm. The enzyme catalyses phosphoenolpyruvate + UDP-N-acetyl-alpha-D-glucosamine = UDP-N-acetyl-3-O-(1-carboxyvinyl)-alpha-D-glucosamine + phosphate. The protein operates within cell wall biogenesis; peptidoglycan biosynthesis. Cell wall formation. Adds enolpyruvyl to UDP-N-acetylglucosamine. This is UDP-N-acetylglucosamine 1-carboxyvinyltransferase from Chromobacterium violaceum (strain ATCC 12472 / DSM 30191 / JCM 1249 / CCUG 213 / NBRC 12614 / NCIMB 9131 / NCTC 9757 / MK).